The following is a 357-amino-acid chain: Phosphoribosylformylglycinamidine cyclo-ligase (357 aa).

It belongs to the AIR synthase family.

It is found in the cytoplasm. It catalyses the reaction 2-formamido-N(1)-(5-O-phospho-beta-D-ribosyl)acetamidine + ATP = 5-amino-1-(5-phospho-beta-D-ribosyl)imidazole + ADP + phosphate + H(+). It functions in the pathway purine metabolism; IMP biosynthesis via de novo pathway; 5-amino-1-(5-phospho-D-ribosyl)imidazole from N(2)-formyl-N(1)-(5-phospho-D-ribosyl)glycinamide: step 2/2. In Rhodopseudomonas palustris (strain BisB18), this protein is Phosphoribosylformylglycinamidine cyclo-ligase.